Consider the following 398-residue polypeptide: Yellow-related salivary protein SP04 (398 aa).

A signal peptide spans 1 to 18 (MKWFLFLLSTIFVQGILG). Positions 73–94 (TLTEIERKKHPERSPPLSKFSG) are disordered. A compositionally biased stretch (basic and acidic residues) spans 75 to 85 (TEIERKKHPER).

Belongs to the major royal jelly protein family. Female salivary gland (at protein level).

The protein resides in the secreted. Probably modulates blood feeding of sand flies on vertebrate species by binding and sequestering different mediators involved in the host response. Binds biogenic amines. Binds serotonin with high affinity. Binds histamine with low affinity. This chain is Yellow-related salivary protein SP04, found in Phlebotomus argentipes (Phlebotomine sand fly).